Reading from the N-terminus, the 102-residue chain is NADH-quinone oxidoreductase subunit K (102 aa).

The next 3 membrane-spanning stretches (helical) occupy residues 6 to 26, 30 to 50, and 65 to 85; these read MEHG…GLLI, LLFI…AFVV, and ILVI…LLLL.

Belongs to the complex I subunit 4L family. As to quaternary structure, NDH-1 is composed of 14 different subunits. Subunits NuoA, H, J, K, L, M, N constitute the membrane sector of the complex.

The protein resides in the cell inner membrane. It catalyses the reaction a quinone + NADH + 5 H(+)(in) = a quinol + NAD(+) + 4 H(+)(out). In terms of biological role, NDH-1 shuttles electrons from NADH, via FMN and iron-sulfur (Fe-S) centers, to quinones in the respiratory chain. The immediate electron acceptor for the enzyme in this species is believed to be ubiquinone. Couples the redox reaction to proton translocation (for every two electrons transferred, four hydrogen ions are translocated across the cytoplasmic membrane), and thus conserves the redox energy in a proton gradient. This Aeromonas salmonicida (strain A449) protein is NADH-quinone oxidoreductase subunit K.